We begin with the raw amino-acid sequence, 309 residues long: Olfactory receptor 2AP1 (309 aa).

Residues 1 to 23 are Extracellular-facing; the sequence is MKNKTVLTEFILLGLTDVPELQV. A glycan (N-linked (GlcNAc...) asparagine) is linked at Asn3. A helical membrane pass occupies residues 24–47; it reads AVFTFLFLAYLLSILGNLTILILT. Topologically, residues 48 to 55 are cytoplasmic; sequence LLDSHLQT. The chain crosses the membrane as a helical span at residues 56-77; the sequence is PMYFFLRNFSFLEISFTNIFIP. The Extracellular portion of the chain corresponds to 78 to 98; sequence RVLISITTGNKSISFAGCFTQ. An N-linked (GlcNAc...) asparagine glycan is attached at Asn87. Residues Cys95 and Cys187 are joined by a disulfide bond. The helical transmembrane segment at 99-118 threads the bilayer; sequence YFFAMFLGATEFYLLAAMSY. At 119-137 the chain is on the cytoplasmic side; the sequence is DRYVAICKPLHYTTIMSSR. A helical membrane pass occupies residues 138 to 156; the sequence is ICIQLIFCSWLGGLMAIIP. The Extracellular portion of the chain corresponds to 157-193; that stretch reads TITLMSQQDFCASNRLNHYFCDYEPLLELSCSDTSLI. Residues 194–217 traverse the membrane as a helical segment; the sequence is EKVVFLVASVTLVVTLVLVILSYA. Residues 218 to 234 are Cytoplasmic-facing; it reads FIIKTILKLPSAQQRTK. The helical transmembrane segment at 235–257 threads the bilayer; sequence AFSTCSSHMIVISLSYGSCMFMY. Over 258–270 the chain is Extracellular; sequence INPSAKEGDTFNK. Residues 271-290 form a helical membrane-spanning segment; sequence GVALLITSVAPLLNPFIYTL. Residues 291 to 309 lie on the Cytoplasmic side of the membrane; the sequence is RNQQVKQPFKDMVKKLLNL.

It belongs to the G-protein coupled receptor 1 family.

Its subcellular location is the cell membrane. In terms of biological role, odorant receptor. This is Olfactory receptor 2AP1 (OR2AP1) from Homo sapiens (Human).